The chain runs to 338 residues: Ornithine carbamoyltransferase, catabolic (338 aa).

Residues 65-68 (STRT), Q92, R116, and 143-146 (HPTQ) contribute to the carbamoyl phosphate site. Residues N175, D239, and 243–244 (SM) contribute to the L-ornithine site. Carbamoyl phosphate is bound by residues 280-281 (CL) and R325.

This sequence belongs to the aspartate/ornithine carbamoyltransferase superfamily. OTCase family.

The protein resides in the cytoplasm. The catalysed reaction is carbamoyl phosphate + L-ornithine = L-citrulline + phosphate + H(+). It participates in amino-acid degradation; L-arginine degradation via ADI pathway; carbamoyl phosphate from L-arginine: step 2/2. Reversibly catalyzes the transfer of the carbamoyl group from carbamoyl phosphate (CP) to the N(epsilon) atom of ornithine (ORN) to produce L-citrulline. This is Ornithine carbamoyltransferase, catabolic from Treponema denticola (strain ATCC 35405 / DSM 14222 / CIP 103919 / JCM 8153 / KCTC 15104).